We begin with the raw amino-acid sequence, 187 residues long: Phospholipase A2-gamma (187 aa).

An N-terminal signal peptide occupies residues 1–25 (MITGLALSRVAFGLTAFLLLAVVSS). 6 disulfide bridges follow: Cys-29–Cys-56, Cys-33–Cys-62, Cys-38–Cys-115, Cys-49–Cys-69, Cys-68–Cys-93, and Cys-75–Cys-86. The Ca(2+) site is built by Tyr-48, Gly-50, and Tyr-53. The active site involves His-72. Asp-73 is a Ca(2+) binding site.

This sequence belongs to the phospholipase A2 family. It depends on Ca(2+) as a cofactor. As to expression, strongly expressed in mature flowers but weakly expressed in other tissues. Detected in buds, open flowers and in pollen.

The protein localises to the secreted. It localises to the golgi apparatus. It is found in the trans-Golgi network. The protein resides in the endoplasmic reticulum. The catalysed reaction is a 1,2-diacyl-sn-glycero-3-phosphocholine + H2O = a 1-acyl-sn-glycero-3-phosphocholine + a fatty acid + H(+). PA2 catalyzes the calcium-dependent hydrolysis of the 2-acyl groups in 3-sn-phosphoglycerides. Releases lysophospholipids (LPLs) and free fatty acids (FFAs) from membrane phospholipids in response to hormones and other external stimuli. Plays a role in pollen development and germination and tube growth. This is Phospholipase A2-gamma (PLA2-GAMMA) from Arabidopsis thaliana (Mouse-ear cress).